We begin with the raw amino-acid sequence, 187 residues long: Protein GrpE (187 aa).

The tract at residues Met-1–Leu-38 is disordered. Residues Asn-11 to Glu-34 are compositionally biased toward acidic residues.

The protein belongs to the GrpE family. Homodimer.

The protein localises to the cytoplasm. Its function is as follows. Participates actively in the response to hyperosmotic and heat shock by preventing the aggregation of stress-denatured proteins, in association with DnaK and GrpE. It is the nucleotide exchange factor for DnaK and may function as a thermosensor. Unfolded proteins bind initially to DnaJ; upon interaction with the DnaJ-bound protein, DnaK hydrolyzes its bound ATP, resulting in the formation of a stable complex. GrpE releases ADP from DnaK; ATP binding to DnaK triggers the release of the substrate protein, thus completing the reaction cycle. Several rounds of ATP-dependent interactions between DnaJ, DnaK and GrpE are required for fully efficient folding. The protein is Protein GrpE of Bacillus subtilis (strain 168).